Consider the following 135-residue polypeptide: ATP synthase epsilon chain (135 aa).

This sequence belongs to the ATPase epsilon chain family. As to quaternary structure, F-type ATPases have 2 components, CF(1) - the catalytic core - and CF(0) - the membrane proton channel. CF(1) has five subunits: alpha(3), beta(3), gamma(1), delta(1), epsilon(1). CF(0) has three main subunits: a, b and c.

It is found in the cell inner membrane. In terms of biological role, produces ATP from ADP in the presence of a proton gradient across the membrane. This Rhizobium leguminosarum bv. trifolii (strain WSM2304) protein is ATP synthase epsilon chain.